The sequence spans 122 residues: Large ribosomal subunit protein uL14 (122 aa).

The protein belongs to the universal ribosomal protein uL14 family. As to quaternary structure, part of the 50S ribosomal subunit. Forms a cluster with proteins L3 and L19. In the 70S ribosome, L14 and L19 interact and together make contacts with the 16S rRNA in bridges B5 and B8.

In terms of biological role, binds to 23S rRNA. Forms part of two intersubunit bridges in the 70S ribosome. The chain is Large ribosomal subunit protein uL14 from Dehalococcoides mccartyi (strain ATCC BAA-2266 / KCTC 15142 / 195) (Dehalococcoides ethenogenes (strain 195)).